The chain runs to 370 residues: DNA replication and repair protein RecF (370 aa).

30–37 (GENAQGKT) lines the ATP pocket.

Belongs to the RecF family.

Its subcellular location is the cytoplasm. Functionally, the RecF protein is involved in DNA metabolism; it is required for DNA replication and normal SOS inducibility. RecF binds preferentially to single-stranded, linear DNA. It also seems to bind ATP. This chain is DNA replication and repair protein RecF, found in Listeria monocytogenes serotype 4b (strain CLIP80459).